Consider the following 2672-residue polypeptide: eIF-2-alpha kinase activator GCN1 (2672 aa).

HEAT repeat units lie at residues 5-42 (LNWE…QETL), 79-117 (NLEP…WINS), 174-211 (CIFQ…YSKL), 227-267 (QAAL…NPPS), 329-366 (FASS…KISN), 372-410 (EDLT…THYE), 509-549 (HGHA…NSSI), 611-648 (KYVT…IFNI), 706-745 (IQPN…EEGV), 902-932 (QDYL…IDSI), and 933-970 (SLTY…EEDE). The HEAT 12; degenerate repeat unit spans residues 975–994 (LLLAMEIISVHAEAFEDPSI). The HEAT 13; degenerate repeat unit spans residues 995-1030 (PRISIVEVLLSLLSLPSKAKIAKDCFNALCQSISVA). HEAT repeat units follow at residues 1031-1067 (PNQE…LEPF), 1099-1138 (VVND…FTSE), 1185-1224 (STVA…REPI), 1243-1281 (QNSK…HLQQ), 1284-1321 (ARIH…QFKQ), 1363-1401 (LSEF…SLGK), 1405-1442 (PYVI…HTTG), 1444-1480 (GVKK…LDPT), 1484-1521 (ASLS…VIRN), 1523-1559 (EIQK…HYID), 1561-1598 (PSLA…LVDT), 1603-1640 (PYLQ…RLGE), 1641-1679 (EQFP…GLGL), 1681-1717 (KLDE…CFGS), 1721-1758 (PYIN…NYAT), 1760-1796 (AVDL…QVTG), 1825-1862 (DRRD…NTPR), 1863-1903 (AVKE…RVGG), 1905-1942 (ALSQ…SAST), 1947-1984 (QFQS…VVGK), 1985-2024 (TAVD…VIFP), 2026-2055 (LIPT…SALY), 2057-2095 (RLSI…SVND), 2097-2134 (EGLH…KTVL), 2138-2175 (VYIP…KVDK), 2206-2243 (RGPN…KTPA), 2250-2286 (VSVI…KIPM), 2290-2328 (PFIP…HQPR), 2347-2384 (GVKT…EEML), 2392-2429 (VAYA…ETGK), 2450-2487 (GLID…LEGE), and 2506-2546 (ENIN…FKFD). Positions 1330–1641 (LMEKLLNPTV…GALVERLGEE (312 aa)) are EF3-like region. Positions 2207–2356 (GPNCVLPIFL…GVKTAMLKAL (150 aa)) are RWDBD region.

Belongs to the GCN1 family. As to quaternary structure, interacts (via N- and C-terminus) with GCN2 (via N-terminal RWD domain); this interaction stimulates GCN2 kinase activity in a GCN20-dependent manner in response to amino acid starvation. Interacts (via C-terminus) with GCN20 (via N-terminus); this interaction stimulates GCN2 kinase activity in response to amino acid starvation. The GCN1-GCN20 complex interacts with GCN2 on translating ribosomes in amino acid-starved cells; GCN1 may bind near the ribosomal A-site and promotes the transfer of uncharged tRNAs from the A-site to the tRNA-binding domain in GCN2 for its subsequent kinase activation, and hence allowing GCN4 translational activation and derepression of amino acid biosynthetic genes. Interacts (via C-terminus) with YIH1 (via N-terminus); this interaction reduces the GCN1-GCN20 complex formation and prevents the interaction of GCN1 with GCN2 and GCN2 kinase activation in amino acid-starved cells. Interacts with GIR2; this interaction prevents the interaction of GCN1 with GCN2 and GCN2 kinase activation in amino acid-starved cells. Interacts (via middle region) with RPS10A and RPS10B; these interactions are direct and promote GCN2 kinase activation. Associates (via N-terminus) with ribosomes; this association is stimulated in a ATP- and GCN20-dependent manner and is necessary to activate GCN2 kinase activity.

It is found in the cytoplasm. In terms of biological role, ribosome collision sensor that activates a translation quality control pathway when a ribosome has stalled during translation. Directly binds to the ribosome and acts as a sentinel for colliding ribosomes. GCN1 also acts as a positive activator of the integrated stress response (ISR) by mediating activation of GCN2 in response to low amino acid, carbon, or purine availability. Component of the GCN1-GCN20 complex that forms a complex with GCN2 on translating ribosomes: during this process, GCN1 acts as a chaperone to facilitate delivery of uncharged tRNAs that enter the A-site of ribosomes to the tRNA-binding domain of GCN2, and hence stimulating GCN2 kinase activity, leading to phosphorylation of eukaryotic translation initiation factor 2 (eIF-2-alpha/SUI2). eIF-2-alpha/SUI2 phosphorylation converts eIF-2-alpha/SUI2 into a global protein synthesis inhibitor, leading to a global attenuation of cap-dependent translation, and thus to a reduced overall utilization of amino acids, while concomitantly initiating the preferential translation of ISR-specific mRNAs, such as the transcriptional activator GCN4, and hence allowing GCN4-mediated reprogramming of amino acid biosynthetic gene expression to alleviate nutrient depletion. This chain is eIF-2-alpha kinase activator GCN1, found in Saccharomyces cerevisiae (strain ATCC 204508 / S288c) (Baker's yeast).